A 156-amino-acid chain; its full sequence is Ribosomal RNA large subunit methyltransferase H (156 aa).

Residues Leu73, Gly104, and Ile123–Leu128 contribute to the S-adenosyl-L-methionine site.

This sequence belongs to the RNA methyltransferase RlmH family. As to quaternary structure, homodimer.

It localises to the cytoplasm. It carries out the reaction pseudouridine(1915) in 23S rRNA + S-adenosyl-L-methionine = N(3)-methylpseudouridine(1915) in 23S rRNA + S-adenosyl-L-homocysteine + H(+). Functionally, specifically methylates the pseudouridine at position 1915 (m3Psi1915) in 23S rRNA. This chain is Ribosomal RNA large subunit methyltransferase H, found in Stenotrophomonas maltophilia (strain R551-3).